Here is a 1745-residue protein sequence, read N- to C-terminus: Collagen alpha-3(V) chain (1745 aa).

The signal sequence occupies residues 1–29; sequence MGNRRDLGQPRAGLCLLLAALQLLPGTQA. One can recognise a Laminin G-like domain in the interval 62-224; the sequence is DRAFRIGQAS…QACERYLPDC (163 aa). N-linked (GlcNAc...) asparagine glycosylation is found at N102 and N141. Residues 211–391 are nonhelical region; sequence QAAFQACERY…AVIEKGQQFE (181 aa). Disordered stretches follow at residues 230–304, 322–362, 387–439, and 476–1492; these read AATV…TPTP, RSLD…EYPS, GQQF…RGPP, and SMKG…PAEL. Residues 244–267 are compositionally biased toward basic residues; that stretch reads PRRKGKGKGRKKGRGRKGKGRKKN. S349 carries O-linked (Xyl...) (chondroitin sulfate) serine glycosylation. Collagen-like domains are found at residues 391–440 and 482–538; these read EGPP…GPPG and GPVG…DGAR. The interval 392-1489 is triple-helical region; sequence GPPGAPGPQG…AGPPGPPGAP (1098 aa). A compositionally biased stretch (pro residues) spans 406 to 424; that stretch reads SGPPGPPGFPGDPGPPGPA. Low complexity-rich tracts occupy residues 426 to 439, 489 to 499, and 597 to 619; these read LPGI…RGPP, RPGPVGLPGHP, and EPGP…PGVT. The segment covering 724–733 has biased composition (basic and acidic residues); that stretch reads QGEKGEKGED. Over residues 765–792 the composition is skewed to low complexity; sequence PKGQAGQAGEEGPPGSAGEKGKLGVPGL. Collagen-like domains lie at 824–877, 905–950, and 951–989; these read GQPG…QGPP, GFQG…GLPG, and LEGR…GDPG. Residues 967-979 show a composition bias toward low complexity; the sequence is LGKEGPAGLRGFP. The span at 1016–1025 shows a compositional bias: gly residues; it reads GPAGGIGLPG. Low complexity-rich tracts occupy residues 1116–1126 and 1141–1152; these read ADGAQGRRGPP and VGVIGPPGLQGL. Residues 1190-1199 show a composition bias toward gly residues; the sequence is GLPGGVGQPG. Pro residues predominate over residues 1213–1222; it reads PGPPGAPGIP. Positions 1234 to 1243 are enriched in low complexity; that stretch reads SGPSGAAGPP. Over residues 1318 to 1330 the composition is skewed to basic and acidic residues; the sequence is MGREGREGEKGAK. The segment covering 1405 to 1416 has biased composition (low complexity); it reads IGLIGLIGPPGE. The segment covering 1429 to 1443 has biased composition (pro residues); that stretch reads QGPPGPKGDPGPPGP. The Collagen-like 6 domain maps to 1430–1488; it reads GPPGPKGDPGPPGPIGSLGHPGPPGVAGPLGQKGSKGSPGSMGPRGDTGPAGPPGPPGA. Low complexity predominate over residues 1458 to 1479; the sequence is PLGQKGSKGSPGSMGPRGDTGP. In terms of domain architecture, Fibrillar collagen NC1 spans 1514-1744; the sequence is EEVLASLTSL…GFELGPVCFS (231 aa). 2 disulfides stabilise this stretch: C1585–C1742 and C1651–C1696.

The protein belongs to the fibrillar collagen family. In terms of assembly, trimers of two alpha 1(V) and one alpha 2(V) chains in most tissues and trimers of one alpha 1(V), one alpha 2(V), and one alpha 3(V) chains in placenta. Post-translationally, prolines at the third position of the tripeptide repeating unit (G-X-Y) are hydroxylated in some or all of the chains. In terms of tissue distribution, detected in fibroblasts (at protein level). Detected in urine (at protein level).

The protein resides in the secreted. It localises to the extracellular space. Its subcellular location is the extracellular matrix. Type V collagen is a member of group I collagen (fibrillar forming collagen). It is a minor connective tissue component of nearly ubiquitous distribution. Type V collagen binds to DNA, heparan sulfate, thrombospondin, heparin, and insulin. In Homo sapiens (Human), this protein is Collagen alpha-3(V) chain (COL5A3).